The following is a 70-amino-acid chain: DNA-directed RNA polymerase subunit omega (70 aa).

The protein belongs to the RNA polymerase subunit omega family. In terms of assembly, in cyanobacteria the RNAP catalytic core is composed of 2 alpha, 1 beta, 1 beta', 1 gamma and 1 omega subunit. When a sigma factor is associated with the core the holoenzyme is formed, which can initiate transcription.

It catalyses the reaction RNA(n) + a ribonucleoside 5'-triphosphate = RNA(n+1) + diphosphate. Its function is as follows. Promotes RNA polymerase assembly. Latches the N- and C-terminal regions of the beta' subunit thereby facilitating its interaction with the beta and alpha subunits. The sequence is that of DNA-directed RNA polymerase subunit omega from Prochlorococcus marinus (strain NATL1A).